The chain runs to 389 residues: MEKAIRNFLSQESAGGILLLVAVALAMLMANSPLSGLYQGFLGTDVQVKIGELDIHKPLILWINDGLMAVFFLLIGLEVKRELLEGALSSVAQASLPTFAAIGGMLVPAGVYLLFNYGDPVTQAGWAIPAATDIAFALGIMALLGSRVPVSLKVFLLALAIIDDLGVIVIIALFYSTDLSTISLVIASLAIAGLVGLNRKGVTSLLPYGILGLILWVAVLKSGVHATLAGVIIAFCIPLRAKDGSSPSEGLEHSLHPWSTFFILPVFAFANAGVYVGNMNLETLISPVPVGIALGLMLGKPIGVMVFSYIAVKLKLAQLPDGIGWKQIAPVAAMCGIGFTMSMFIASLAFEHADPMYGDLARLGTLIGSIMAALVGYFWLSKVLPNKGV.

11 helical membrane-spanning segments follow: residues 14–34, 59–79, 95–115, 124–144, 154–174, 177–197, 213–233, 257–277, 292–312, 328–348, and 363–383; these read AGGI…NSPL, LILW…GLEV, SLPT…YLLF, AGWA…MALL, VFLL…IALF, TDLS…LVGL, LILW…GVII, PWST…VYVG, IALG…YIAV, IAPV…IASL, and LGTL…LSKV.

This sequence belongs to the NhaA Na(+)/H(+) (TC 2.A.33) antiporter family.

The protein resides in the cell inner membrane. It catalyses the reaction Na(+)(in) + 2 H(+)(out) = Na(+)(out) + 2 H(+)(in). Na(+)/H(+) antiporter that extrudes sodium in exchange for external protons. The sequence is that of Na(+)/H(+) antiporter NhaA from Shewanella baltica (strain OS195).